The primary structure comprises 578 residues: Type I restriction enzyme MjaVIII methylase subunit (578 aa).

Residues 250-255, 280-282, Glu-303, and 332-333 each bind S-adenosyl-L-methionine; these read EVYTPI, SGS, and DS.

This sequence belongs to the N(4)/N(6)-methyltransferase family. As to quaternary structure, the type I restriction/modification system is composed of three polypeptides R, M and S.

It carries out the reaction a 2'-deoxyadenosine in DNA + S-adenosyl-L-methionine = an N(6)-methyl-2'-deoxyadenosine in DNA + S-adenosyl-L-homocysteine + H(+). Functionally, the subtype gamma methyltransferase (M) subunit of a type I restriction enzyme. The M and S subunits together form a methyltransferase (MTase) that methylates A-2 on the top and A-3 on the bottom strand of the sequence 5'-GAYN(5)GTAA-3'. In the presence of the R subunit the complex can also act as an endonuclease, binding to the same target sequence but cutting the DNA some distance from this site. Whether the DNA is cut or modified depends on the methylation state of the target sequence. When the target site is unmodified, the DNA is cut. When the target site is hemimethylated, the complex acts as a maintenance MTase modifying the DNA so that both strands become methylated. After locating a non-methylated recognition site, the enzyme complex serves as a molecular motor that translocates DNA in an ATP-dependent manner until a collision occurs that triggers cleavage. This Methanocaldococcus jannaschii (strain ATCC 43067 / DSM 2661 / JAL-1 / JCM 10045 / NBRC 100440) (Methanococcus jannaschii) protein is Type I restriction enzyme MjaVIII methylase subunit.